Reading from the N-terminus, the 315-residue chain is WD repeat domain-containing protein 83 (315 aa).

WD repeat units follow at residues 23–62 (CGQGAVRAVRFNVDGNYCLTCGSDKTLKLWNPLRGTLLRT), 65–104 (GHGYEVLDAAGSFDNSHLCSGGGDKTVVLWDVATGQVVRK), 107–146 (GHAGKVNTVQFNEEATVILSGSIDSSVRCWDCRSRKPEPV), 151–188 (EARDGISSVKVSDHEILAGSVDGRVRRYDLRMGQVTSD), 190–228 (VGSPITCTCFSRDGQCTLISSLDSTLRLLDKDTGELLGE), 231–272 (GHKN…LALA), and 275–313 (VGSNVVQSLAYHPADPCLLTAMGGSIQYWREETYEAEGG).

The protein belongs to the WD repeat MORG1 family. Interacts with EGLN3/PHD3. Interacts with ERK signaling proteins MAP2K1/MEK1, MAP2K2/MEK2, LAMTOR3, ARAF/Raf-1, MAPK1/ERK2 and MAPK3/ERK1. Identified in the spliceosome C complex. Interacts with PARD6B and CRB3. Interacts strongly with GTP-bound RRAGA but not with inactive GDP-bound. Interacts with p62/SQSTM1. Highly expressed in testis and brain. Expressed at intermediate level in heart, liver and kidney. Weakly expressed in spleen and lung and absent in muscle.

It is found in the cytoplasm. The protein localises to the lysosome. It localises to the nucleus. Its function is as follows. Molecular scaffold protein for various multimeric protein complexes. Acts as a module in the assembly of a multicomponent scaffold for the ERK pathway, linking ERK responses to specific agonists. At low concentrations it enhances ERK activation, whereas high concentrations lead to the inhibition of ERK activation. Also involved in response to hypoxia by acting as a negative regulator of HIF1A/HIF-1-alpha via its interaction with EGLN3/PHD3. May promote degradation of HIF1A. May act by recruiting signaling complexes to a specific upstream activator. May also be involved in pre-mRNA splicing. Participates in tight junction development by regulating apico-basal polarity, a key step in tissue development and organization. Mechanistically, regulates the translocation of PAR6-aPKC from the cytoplasm to the apical surface by acting as an adapter between PARD6B AND CRB3. Also acts as a negative regulator of mTORC1 under nutrient-rich conditions by binding to the active Rag GTPases to inhibit mTORC1 localization to the lysosome and phosphorylation of downstream targets. This facilitates constitutive basal autophagy during nutrient availability. In Rattus norvegicus (Rat), this protein is WD repeat domain-containing protein 83 (Wdr83).